Consider the following 460-residue polypeptide: Allantoinase (460 aa).

The Zn(2+) site is built by histidine 70, histidine 72, lysine 157, histidine 193, histidine 250, and aspartate 323. The residue at position 157 (lysine 157) is an N6-carboxylysine.

This sequence belongs to the metallo-dependent hydrolases superfamily. Allantoinase family. Homotetramer. It depends on Zn(2+) as a cofactor. Carboxylation allows a single lysine to coordinate two zinc ions.

It catalyses the reaction (S)-allantoin + H2O = allantoate + H(+). Its pathway is nitrogen metabolism; (S)-allantoin degradation; allantoate from (S)-allantoin: step 1/1. Its function is as follows. Catalyzes the conversion of allantoin (5-ureidohydantoin) to allantoic acid by hydrolytic cleavage of the five-member hydantoin ring. Involved in the utilization of purines as secondary nitrogen sources, when primary sources are limiting. This Saccharomyces cerevisiae (strain ATCC 204508 / S288c) (Baker's yeast) protein is Allantoinase (DAL1).